We begin with the raw amino-acid sequence, 390 residues long: Purine permease 21 (390 aa).

Positions 12–34 (QQGKEPIPTDQDERSSVSGSQTK) are disordered. Helical transmembrane passes span 44–64 (WLRVAIYTFFVISGQSVATIL), 78–98 (LATVVQLVGFPILLPYHLLSV), 118–138 (LVYIVLGLLVGAACYLYSIGL), 140–160 (YLPVSTLSLICASQLAFTAFF), 169–189 (LTPIILNSLFLLTISSTLLAF), 204–224 (YVKGFVCTVGASAGFGLLLSL), 241–261 (VINMIIYMSLVASCVSVVGLF), 287–307 (LVWTAVTWQVFSIGCTGLIFE), 312–332 (FSNAISALGLPVVPILAVIIF), and 336–356 (MNGLKVISMILAIWGFVSYVY). A disordered region spans residues 367–390 (KSNEIPTTESPDRPEAEGSSEQSK).

This sequence belongs to the purine permeases (TC 2.A.7.14) family. Expressed in mesophyll cells.

It is found in the membrane. The polypeptide is Purine permease 21 (Arabidopsis thaliana (Mouse-ear cress)).